We begin with the raw amino-acid sequence, 307 residues long: Elongation factor Ts (307 aa).

The interval 80–83 (TDFV) is involved in Mg(2+) ion dislocation from EF-Tu.

The protein belongs to the EF-Ts family.

It is found in the cytoplasm. Associates with the EF-Tu.GDP complex and induces the exchange of GDP to GTP. It remains bound to the aminoacyl-tRNA.EF-Tu.GTP complex up to the GTP hydrolysis stage on the ribosome. This Rhizorhabdus wittichii (strain DSM 6014 / CCUG 31198 / JCM 15750 / NBRC 105917 / EY 4224 / RW1) (Sphingomonas wittichii) protein is Elongation factor Ts.